A 253-amino-acid chain; its full sequence is Decarboxylase DEC1 (253 aa).

Lys121 functions as the Schiff-base intermediate with acetoacetate in the catalytic mechanism.

This sequence belongs to the ADC family.

It functions in the pathway mycotoxin biosynthesis. Functionally, decarboxylase; part of the Tox1B locus, one of the 2 loci that mediate the biosynthesis of T-toxin, a family of linear polyketides 37 to 45 carbons in length, of which the major component is 41 carbons, and which leads to high virulence to maize. One of the PKSs (PKS1 or PKS2) could synthesize a precursor, used subsequently by the other PKS as starter unit, to add additional carbons. Variability in the length of the final carbon backbone C35-47 could be achieved by varying the number of condensation cycles, or use of different starter or extender units or might be due to decarboxylation of the penultimate product, catalyzed by DEC1. Additional proteins are required for the biosynthesis of T-toxin, including oxidoreductases RED1, RED2, RED3, LAM1 and OXI1, as well as esterase TOX9. In Cochliobolus heterostrophus (strain C4 / ATCC 48331 / race T) (Southern corn leaf blight fungus), this protein is Decarboxylase DEC1.